Reading from the N-terminus, the 429-residue chain is Keratin, type I cytoskeletal 18 (429 aa).

The interval 2-78 (SYSRSVYSSS…NVNLIGGGQN (77 aa)) is head. The coil 1A stretch occupies residues 79 to 114 (EKETMQDLNDRLASYLERVRSLEAANKKLEVQIRQH). The region spanning 79–389 (EKETMQDLND…RLLEGDGSFD (311 aa)) is the IF rod domain. A linker 1 region spans residues 115-130 (TEKKGPSKDWSPYYKT). Positions 131–222 (IEDLRKQVFD…KNHQDDVTEL (92 aa)) are coil 1B. A linker 12 region spans residues 223 to 246 (QAQVARSAVTVEVDAPKSQDLGKI). Residues 247–385 (MTELRAQYDG…HTYRRLLEGD (139 aa)) are coil 2. A tail region spans residues 386-429 (GSFDLQDAVPTVTTQTVKKVITTTQRIVDGKVVSESNDTEVLKS).

Belongs to the intermediate filament family. In terms of assembly, heterotetramer of two type I and two type II keratins. Keratin-18 associates with keratin-8. Post-translationally, phosphorylated. In terms of processing, proteolytically cleaved by caspases during epithelial cell apoptosis.

In terms of biological role, when phosphorylated, plays a role in filament reorganization. The protein is Keratin, type I cytoskeletal 18 of Xenopus tropicalis (Western clawed frog).